The following is a 264-amino-acid chain: Thymidylate synthase (264 aa).

Arginine 21 contacts dUMP. Histidine 51 is a binding site for (6R)-5,10-methylene-5,6,7,8-tetrahydrofolate. A dUMP-binding site is contributed by 126-127; it reads RR. Catalysis depends on cysteine 146, which acts as the Nucleophile. Residues 166–169, asparagine 177, and 207–209 each bind dUMP; these read RSAD and HLY. Residue aspartate 169 coordinates (6R)-5,10-methylene-5,6,7,8-tetrahydrofolate. (6R)-5,10-methylene-5,6,7,8-tetrahydrofolate is bound at residue alanine 263.

The protein belongs to the thymidylate synthase family. Bacterial-type ThyA subfamily. Homodimer.

Its subcellular location is the cytoplasm. The enzyme catalyses dUMP + (6R)-5,10-methylene-5,6,7,8-tetrahydrofolate = 7,8-dihydrofolate + dTMP. It participates in pyrimidine metabolism; dTTP biosynthesis. Functionally, catalyzes the reductive methylation of 2'-deoxyuridine-5'-monophosphate (dUMP) to 2'-deoxythymidine-5'-monophosphate (dTMP) while utilizing 5,10-methylenetetrahydrofolate (mTHF) as the methyl donor and reductant in the reaction, yielding dihydrofolate (DHF) as a by-product. This enzymatic reaction provides an intracellular de novo source of dTMP, an essential precursor for DNA biosynthesis. The chain is Thymidylate synthase from Rhizobium johnstonii (strain DSM 114642 / LMG 32736 / 3841) (Rhizobium leguminosarum bv. viciae).